The following is a 264-amino-acid chain: Thymidylate synthase (264 aa).

Arg21 provides a ligand contact to dUMP. (6R)-5,10-methylene-5,6,7,8-tetrahydrofolate is bound at residue His51. 126–127 is a binding site for dUMP; sequence RR. Cys146 (nucleophile) is an active-site residue. DUMP-binding positions include 166-169, Asn177, and 207-209; these read RSCD and HLY. Asp169 provides a ligand contact to (6R)-5,10-methylene-5,6,7,8-tetrahydrofolate. Ser263 is a (6R)-5,10-methylene-5,6,7,8-tetrahydrofolate binding site.

Belongs to the thymidylate synthase family. Bacterial-type ThyA subfamily. In terms of assembly, homodimer.

Its subcellular location is the cytoplasm. It carries out the reaction dUMP + (6R)-5,10-methylene-5,6,7,8-tetrahydrofolate = 7,8-dihydrofolate + dTMP. It functions in the pathway pyrimidine metabolism; dTTP biosynthesis. In terms of biological role, catalyzes the reductive methylation of 2'-deoxyuridine-5'-monophosphate (dUMP) to 2'-deoxythymidine-5'-monophosphate (dTMP) while utilizing 5,10-methylenetetrahydrofolate (mTHF) as the methyl donor and reductant in the reaction, yielding dihydrofolate (DHF) as a by-product. This enzymatic reaction provides an intracellular de novo source of dTMP, an essential precursor for DNA biosynthesis. The polypeptide is Thymidylate synthase (Buchnera aphidicola subsp. Acyrthosiphon pisum (strain APS) (Acyrthosiphon pisum symbiotic bacterium)).